The following is a 252-amino-acid chain: Triosephosphate isomerase (252 aa).

10-12 (NWK) serves as a coordination point for substrate. The active-site Electrophile is His-96. Residue Glu-168 is the Proton acceptor of the active site. Substrate-binding positions include Gly-174, Ser-214, and 235-236 (GG).

This sequence belongs to the triosephosphate isomerase family. As to quaternary structure, homodimer.

It localises to the cytoplasm. The catalysed reaction is D-glyceraldehyde 3-phosphate = dihydroxyacetone phosphate. It functions in the pathway carbohydrate biosynthesis; gluconeogenesis. The protein operates within carbohydrate degradation; glycolysis; D-glyceraldehyde 3-phosphate from glycerone phosphate: step 1/1. In terms of biological role, involved in the gluconeogenesis. Catalyzes stereospecifically the conversion of dihydroxyacetone phosphate (DHAP) to D-glyceraldehyde-3-phosphate (G3P). The sequence is that of Triosephosphate isomerase from Streptococcus equi subsp. zooepidemicus (strain MGCS10565).